The chain runs to 196 residues: Leucyl/phenylalanyl-tRNA--protein transferase (196 aa).

This sequence belongs to the L/F-transferase family.

The protein localises to the cytoplasm. The enzyme catalyses N-terminal L-lysyl-[protein] + L-leucyl-tRNA(Leu) = N-terminal L-leucyl-L-lysyl-[protein] + tRNA(Leu) + H(+). The catalysed reaction is N-terminal L-arginyl-[protein] + L-leucyl-tRNA(Leu) = N-terminal L-leucyl-L-arginyl-[protein] + tRNA(Leu) + H(+). It catalyses the reaction L-phenylalanyl-tRNA(Phe) + an N-terminal L-alpha-aminoacyl-[protein] = an N-terminal L-phenylalanyl-L-alpha-aminoacyl-[protein] + tRNA(Phe). Its function is as follows. Functions in the N-end rule pathway of protein degradation where it conjugates Leu, Phe and, less efficiently, Met from aminoacyl-tRNAs to the N-termini of proteins containing an N-terminal arginine or lysine. The polypeptide is Leucyl/phenylalanyl-tRNA--protein transferase (Thermosynechococcus vestitus (strain NIES-2133 / IAM M-273 / BP-1)).